The sequence spans 152 residues: Large ribosomal subunit protein bL9 (152 aa).

It belongs to the bacterial ribosomal protein bL9 family.

Binds to the 23S rRNA. The sequence is that of Large ribosomal subunit protein bL9 from Synechococcus elongatus (strain ATCC 33912 / PCC 7942 / FACHB-805) (Anacystis nidulans R2).